Consider the following 469-residue polypeptide: MGKNIIEKIWDKHVVYQEEGKPDLLYIDLHLIHEVTSPQAFEGLRMNGRQVRRPDLSFATMDHNVPTKNLPTIHDPIARNQIETLAKNAEEFGVELAGMGHPDQGIVHVIGPELGLTQPGKTIVCGDSHTSTHGAFGAIAFGIGTSEVEHVLSTQTLWQNKPKTMEIRVEGELSVGVAAKDIILAIIAKFGIGVGTGYIVEFTGEAIHKLSMEERMTICNMSIEAGAKAGLISPDQITVDYIRGRKYAPQGEQFEEAANYWLSLASDEDATYDTVRIIHAEEIEPIITWGTNPSMGTGVSGHVPTLADYKDESDKAALQKALDYMGLEEGQPLTSIDIQHVFIGSCTNSRMSDLRAAANVIKGRKVHGDVTAIVVPGSYSTKKQAEAEGLDKIFIDAGFEWRESGCSMCLAMNDDVVPAGERCASTSNRNFEGRQGAGSRTHLVSPPMAAAAAIAGHFVDVREFVKETV.

The [4Fe-4S] cluster site is built by C346, C406, and C409.

Belongs to the aconitase/IPM isomerase family. LeuC type 1 subfamily. In terms of assembly, heterodimer of LeuC and LeuD. The cofactor is [4Fe-4S] cluster.

The catalysed reaction is (2R,3S)-3-isopropylmalate = (2S)-2-isopropylmalate. It functions in the pathway amino-acid biosynthesis; L-leucine biosynthesis; L-leucine from 3-methyl-2-oxobutanoate: step 2/4. Its function is as follows. Catalyzes the isomerization between 2-isopropylmalate and 3-isopropylmalate, via the formation of 2-isopropylmaleate. The sequence is that of 3-isopropylmalate dehydratase large subunit from Lysinibacillus sphaericus (strain C3-41).